Here is a 196-residue protein sequence, read N- to C-terminus: Adenylate kinase (196 aa).

9 to 17 (GIPGVGKST) is an ATP binding site.

The protein belongs to the archaeal adenylate kinase family.

It is found in the cytoplasm. It carries out the reaction AMP + ATP = 2 ADP. In Pyrococcus abyssi (strain GE5 / Orsay), this protein is Adenylate kinase (adkA).